The primary structure comprises 383 residues: 8-amino-7-oxononanoate synthase (383 aa).

Residue arginine 21 participates in substrate binding. 108–109 contacts pyridoxal 5'-phosphate; the sequence is GY. Residue histidine 133 participates in substrate binding. Pyridoxal 5'-phosphate contacts are provided by serine 179, histidine 207, and threonine 233. Lysine 236 carries the post-translational modification N6-(pyridoxal phosphate)lysine. Substrate is bound at residue threonine 350.

The protein belongs to the class-II pyridoxal-phosphate-dependent aminotransferase family. BioF subfamily. As to quaternary structure, homodimer. It depends on pyridoxal 5'-phosphate as a cofactor.

The enzyme catalyses 6-carboxyhexanoyl-[ACP] + L-alanine + H(+) = (8S)-8-amino-7-oxononanoate + holo-[ACP] + CO2. It participates in cofactor biosynthesis; biotin biosynthesis. Functionally, catalyzes the decarboxylative condensation of pimeloyl-[acyl-carrier protein] and L-alanine to produce 8-amino-7-oxononanoate (AON), [acyl-carrier protein], and carbon dioxide. The sequence is that of 8-amino-7-oxononanoate synthase from Yersinia pestis bv. Antiqua (strain Angola).